A 481-amino-acid chain; its full sequence is ATP synthase subunit beta, plastid (481 aa).

Glycine 162 to threonine 169 is a binding site for ATP.

It belongs to the ATPase alpha/beta chains family. F-type ATPases have 2 components, CF(1) - the catalytic core - and CF(0) - the membrane proton channel. CF(1) has five subunits: alpha(3), beta(3), gamma(1), delta(1), epsilon(1). CF(0) has four main subunits: a(1), b(1), b'(1) and c(9-12).

Its subcellular location is the plastid membrane. The enzyme catalyses ATP + H2O + 4 H(+)(in) = ADP + phosphate + 5 H(+)(out). Produces ATP from ADP in the presence of a proton gradient across the membrane. The catalytic sites are hosted primarily by the beta subunits. In Prototheca wickerhamii, this protein is ATP synthase subunit beta, plastid (atpB).